Consider the following 134-residue polypeptide: MGYEEQLDRALEETPDIEGTAARFSVPDPDVRQEGNATVYENFQPTIDRLDREESHVMKFLQNELGTSANIDERGRLRLTGEFRQARVEEAINDYVEGYVICPECGLPDTRLEKENGAEVLRCEACGARSPAGN.

Over residues 1–12 (MGYEEQLDRALE) the composition is skewed to basic and acidic residues. The tract at residues 1 to 32 (MGYEEQLDRALEETPDIEGTAARFSVPDPDVR) is disordered.

This sequence belongs to the eIF-2-beta/eIF-5 family. As to quaternary structure, heterotrimer composed of an alpha, a beta and a gamma chain.

EIF-2 functions in the early steps of protein synthesis by forming a ternary complex with GTP and initiator tRNA. This is Translation initiation factor 2 subunit beta from Natronomonas pharaonis (strain ATCC 35678 / DSM 2160 / CIP 103997 / JCM 8858 / NBRC 14720 / NCIMB 2260 / Gabara) (Halobacterium pharaonis).